Consider the following 589-residue polypeptide: Guanylate-binding protein 2 (589 aa).

The GTPase domain (Globular) stretch occupies residues 1 to 309; that stretch reads MASEIHMLQP…GAISSGSLPC (309 aa). In terms of domain architecture, GB1/RHD3-type G spans 35 to 276; the sequence is NQPVVVVAIV…FTSYIFSYSA (242 aa). GTP contacts are provided by residues 45–52, 181–182, and L245; these read GLYRTGKS and RD. Residue C586 is modified to Cysteine methyl ester. C586 carries S-geranylgeranyl cysteine lipidation. A propeptide spans 587–589 (removed in mature form); sequence TIL.

Belongs to the TRAFAC class dynamin-like GTPase superfamily. GB1/RHD3 GTPase family. GB1 subfamily. In terms of assembly, homodimer; homodimerization occurs upon GTP-binding and is required for the association with membranous structures. Heterodimer with other family members, including GBP1, GBP3, GBP4 and GBP5. Isoprenylation is required for proper subcellular location. As to expression, widely expressed.

It localises to the cytoplasmic vesicle membrane. The protein localises to the golgi apparatus membrane. The protein resides in the cytoplasm. Its subcellular location is the perinuclear region. It catalyses the reaction GTP + H2O = GDP + phosphate + H(+). Functionally, interferon (IFN)-inducible GTPase that plays important roles in innate immunity against a diverse range of bacterial, viral and protozoan pathogens. Hydrolyzes GTP to GMP in 2 consecutive cleavage reactions, but the major reaction product is GDP. Following infection, recruited to the pathogen-containing vacuoles or vacuole-escaped bacteria and acts as a positive regulator of inflammasome assembly by promoting the release of inflammasome ligands from bacteria. Acts by promoting lysis of pathogen-containing vacuoles, releasing pathogens into the cytosol. Following pathogen release in the cytosol, promotes recruitment of proteins that mediate bacterial cytolysis: this liberates ligands that are detected by inflammasomes, such as lipopolysaccharide (LPS) that activates the non-canonical CASP4/CASP11 inflammasome or double-stranded DNA (dsDNA) that activates the AIM2 inflammasome. Confers protection to the protozoan pathogen Toxoplasma gondii. Independently of its GTPase activity, acts as an inhibitor of various viruses infectivity by inhibiting FURIN-mediated maturation of viral envelope proteins. The chain is Guanylate-binding protein 2 (Gbp2) from Rattus norvegicus (Rat).